Reading from the N-terminus, the 844-residue chain is DNA mismatch repair protein MutS (844 aa).

G602–S609 is an ATP binding site.

Belongs to the DNA mismatch repair MutS family.

Functionally, this protein is involved in the repair of mismatches in DNA. It is possible that it carries out the mismatch recognition step. This protein has a weak ATPase activity. This chain is DNA mismatch repair protein MutS, found in Streptococcus pneumoniae (strain ATCC 700669 / Spain 23F-1).